The following is a 421-amino-acid chain: MYKKLYLIGILLLGLISGLTFNLIFFTVPYQLSEAKYTTDIIGAISLAAFPYCLKVIWSPFIDKYSIPFLGVKLGHRRSWALVSQIFLILAMMWFLKRSPCNNLCITAIILFIIAFFSSTQDIVLDAYRIERTTSKEELSIVFTFSSIGFRLGMLLGSVGSLYSSIIFGWNTVYKFALFITMVGPIVILCIKEPKLKTKRHTTNTLIDLQQYFEVIKKSIISFKNEQQYLLLIILFVFLYKAADSIPMAMSIPLFLDLSFTTHEIAVIYKAYGLLIMIVGGTLGGILAAKIGIFHSVLIGGVIQLLSPLMFMILATIGYDIKTFIITITIQNFCSGFAGTIISIYFASLCNSEFVATQYAISASFSSLSRIILASLGGICAKHLTWSVFFLCNTLFSMLFIPIFYTIYRKKLHFMNHSKKI.

Helical transmembrane passes span 6-26 (YLIG…LIFF), 41-61 (IIGA…WSPF), 80-100 (WALV…KRSP), 104-124 (LCIT…QDIV), 139-159 (LSIV…LGSV), 166-186 (IIFG…VGPI), 230-250 (LLLI…PMAM), 274-294 (LLIM…IGIF), 297-317 (VLIG…LATI), 324-344 (FIIT…IISI), 360-380 (AISA…GGIC), and 388-408 (VFFL…YTIY).

It belongs to the major facilitator superfamily.

It is found in the cell inner membrane. In Rickettsia prowazekii (strain Madrid E), this protein is Putative transporter AmpG 3 (ampG3).